Here is a 120-residue protein sequence, read N- to C-terminus: Large ribosomal subunit protein bL17 (120 aa).

This sequence belongs to the bacterial ribosomal protein bL17 family. In terms of assembly, part of the 50S ribosomal subunit. Contacts protein L32.

The sequence is that of Large ribosomal subunit protein bL17 from Geobacillus thermodenitrificans (strain NG80-2).